Reading from the N-terminus, the 207-residue chain is Thiamine-phosphate synthase (207 aa).

Residues 37–41 and Asn-69 contribute to the 4-amino-2-methyl-5-(diphosphooxymethyl)pyrimidine site; that span reads QLREK. Residues Asp-70 and Asp-89 each contribute to the Mg(2+) site. Residue Ser-108 coordinates 4-amino-2-methyl-5-(diphosphooxymethyl)pyrimidine. Position 134-136 (134-136) interacts with 2-[(2R,5Z)-2-carboxy-4-methylthiazol-5(2H)-ylidene]ethyl phosphate; it reads TGS. Lys-137 contacts 4-amino-2-methyl-5-(diphosphooxymethyl)pyrimidine. 2-[(2R,5Z)-2-carboxy-4-methylthiazol-5(2H)-ylidene]ethyl phosphate contacts are provided by residues Gly-165 and 185 to 186; that span reads IS.

It belongs to the thiamine-phosphate synthase family. It depends on Mg(2+) as a cofactor.

It catalyses the reaction 2-[(2R,5Z)-2-carboxy-4-methylthiazol-5(2H)-ylidene]ethyl phosphate + 4-amino-2-methyl-5-(diphosphooxymethyl)pyrimidine + 2 H(+) = thiamine phosphate + CO2 + diphosphate. The catalysed reaction is 2-(2-carboxy-4-methylthiazol-5-yl)ethyl phosphate + 4-amino-2-methyl-5-(diphosphooxymethyl)pyrimidine + 2 H(+) = thiamine phosphate + CO2 + diphosphate. The enzyme catalyses 4-methyl-5-(2-phosphooxyethyl)-thiazole + 4-amino-2-methyl-5-(diphosphooxymethyl)pyrimidine + H(+) = thiamine phosphate + diphosphate. The protein operates within cofactor biosynthesis; thiamine diphosphate biosynthesis; thiamine phosphate from 4-amino-2-methyl-5-diphosphomethylpyrimidine and 4-methyl-5-(2-phosphoethyl)-thiazole: step 1/1. Functionally, condenses 4-methyl-5-(beta-hydroxyethyl)thiazole monophosphate (THZ-P) and 2-methyl-4-amino-5-hydroxymethyl pyrimidine pyrophosphate (HMP-PP) to form thiamine monophosphate (TMP). The chain is Thiamine-phosphate synthase from Desulfitobacterium hafniense (strain Y51).